The chain runs to 274 residues: Protein STAY-GREEN, chloroplastic (274 aa).

A chloroplast-targeting transit peptide spans Met1–Arg48.

The protein belongs to the staygreen family. In terms of assembly, interacts with LHCII complex. As to expression, expressed in leaves, roots and developing seeds.

The protein localises to the plastid. It is found in the chloroplast membrane. It localises to the chloroplast stroma. Its function is as follows. Involved in the disassembling mechanism of the intact light-harvesting complex of photosystem II (LHCII) in the thylakoid membranes. Required to trigger chlorophyll degradation during natural and dark-induced leaf senescence. The polypeptide is Protein STAY-GREEN, chloroplastic (SGR) (Oryza sativa subsp. japonica (Rice)).